We begin with the raw amino-acid sequence, 321 residues long: tRNA(Ile)-lysidine synthase (321 aa).

Residue 30–35 (SGGSDS) participates in ATP binding.

The protein belongs to the tRNA(Ile)-lysidine synthase family.

It is found in the cytoplasm. It carries out the reaction cytidine(34) in tRNA(Ile2) + L-lysine + ATP = lysidine(34) in tRNA(Ile2) + AMP + diphosphate + H(+). Functionally, ligates lysine onto the cytidine present at position 34 of the AUA codon-specific tRNA(Ile) that contains the anticodon CAU, in an ATP-dependent manner. Cytidine is converted to lysidine, thus changing the amino acid specificity of the tRNA from methionine to isoleucine. The protein is tRNA(Ile)-lysidine synthase of Chlamydia trachomatis serovar L2 (strain ATCC VR-902B / DSM 19102 / 434/Bu).